Here is a 275-residue protein sequence, read N- to C-terminus: Elongation factor Ts (275 aa).

The tract at residues 76–79 is involved in Mg(2+) ion dislocation from EF-Tu; the sequence is TDFV.

This sequence belongs to the EF-Ts family.

The protein localises to the cytoplasm. Functionally, associates with the EF-Tu.GDP complex and induces the exchange of GDP to GTP. It remains bound to the aminoacyl-tRNA.EF-Tu.GTP complex up to the GTP hydrolysis stage on the ribosome. The polypeptide is Elongation factor Ts (Corynebacterium diphtheriae (strain ATCC 700971 / NCTC 13129 / Biotype gravis)).